The following is a 459-amino-acid chain: 1,3-beta-glucanosyltransferase gas2 (459 aa).

The first 19 residues, M1–A19, serve as a signal peptide directing secretion. 2 N-linked (GlcNAc...) asparagine glycosylation sites follow: N34 and N68. Residues C69 and C98 are joined by a disulfide bond. Y87 contacts (1,3-beta-D-glucosyl)n. N-linked (GlcNAc...) asparagine glycans are attached at residues N90, N104, and N146. (1,3-beta-D-glucosyl)n contacts are provided by N155 and E156. E156 acts as the Proton donor in catalysis. Residue N160 is glycosylated (N-linked (GlcNAc...) asparagine). (1,3-beta-D-glucosyl)n-binding residues include D197 and R202. 2 disulfides stabilise this stretch: C211–C350 and C235–C266. 3 N-linked (GlcNAc...) asparagine glycosylation sites follow: N212, N218, and N254. E263 functions as the Nucleophile in the catalytic mechanism. Residue N284 is glycosylated (N-linked (GlcNAc...) asparagine). Y295 is a binding site for (1,3-beta-D-glucosyl)n. 5 N-linked (GlcNAc...) asparagine glycosylation sites follow: N308, N334, N344, N354, and N370. Cystine bridges form between C374–C427, C383–C449, and C402–C409. N-linked (GlcNAc...) asparagine glycosylation occurs at N423.

The protein belongs to the glycosyl hydrolase 72 family.

It is found in the endoplasmic reticulum lumen. The protein resides in the secreted. Splits internally a 1,3-beta-glucan molecule and transfers the newly generated reducing end (the donor) to the non-reducing end of another 1,3-beta-glucan molecule (the acceptor) forming a 1,3-beta linkage, resulting in the elongation of 1,3-beta-glucan chains in the cell wall. This is 1,3-beta-glucanosyltransferase gas2 (gas2) from Schizosaccharomyces pombe (strain 972 / ATCC 24843) (Fission yeast).